The chain runs to 451 residues: MSELRGSWDEQQQSMAYLPDADMDTVAASTSLPDPAGDFDRNVPRICGVCGDRATGFHFNAMTCEGCKGFFRRSMKRKAMFTCPFNGDCKITKDNRRHCQACRLKRCVDIGMMKEFILTDEEVQRKREMILKRKEEEALKESLKPKLSEEQQKVIDTLLEAHHKTFDTTYSDFNKFRPPVRSKFSSRMATHSSSVVSQDFSSEDSNDVFGSDAFAAFPEPMEPQMFSNLDLSEESDESPSMNIELPHLPMLPHLADLVSYSIQKVIGFAKMIPGFRDLTAEDQIALLKSSAIEVIMLRSNQSFTMEDMSWTCGSNDFKYKVSDVTQAGHSMDLLEPLVKFQVGLKKLNLHEEEHVLLMAICILSPDRPGVQDTSLVESIQDRLSDILQTYIRCRHPPPGSRLLYAKMIQKLADLRSLNEEHSKQYRCLSFQPEHSMQLTPLVLEVFGNEIS.

Residues 44–112 constitute a DNA-binding region (nuclear receptor); it reads PRICGVCGDR…RLKRCVDIGM (69 aa). Cys47, Cys50, Cys64, Cys67, Cys83, Cys89, Cys99, and Cys102 together coordinate Zn(2+). 2 NR C4-type zinc fingers span residues 47-67 and 83-107; these read CGVCGDRATGFHFNAMTCEGC and CPFNGDCKITKDNRRHCQACRLKRC. Hinge stretches follow at residues 113–149 and 120–149; these read MKEFILTDEEVQRKREMILKRKEEEALKESLKPKLSE and DEEVQRKREMILKRKEEEALKESLKPKLSE. Positions 150–447 constitute an NR LBD domain; the sequence is EQQKVIDTLL…LTPLVLEVFG (298 aa). Ser261 provides a ligand contact to calcitriol. An interaction with coactivator LXXLL motif region spans residues 270-288; that stretch reads KMIPGFRDLTAEDQIALLK. Positions 298, 302, 329, and 421 each coordinate calcitriol. Residues 440–448 carry the 9aaTAD motif; that stretch reads PLVLEVFGN.

The protein belongs to the nuclear hormone receptor family. NR1 subfamily. As to quaternary structure, homodimer in the absence of bound vitamin D3. Heterodimer with RXRA after vitamin D3 binding. Expressed in kidney and intestine.

It localises to the nucleus. The protein resides in the cytoplasm. Functionally, nuclear receptor for calcitriol, the active form of vitamin D3 which mediates the action of this vitamin on cells. Enters the nucleus upon vitamin D3 binding where it forms heterodimers with the retinoid X receptor/RXR. The VDR-RXR heterodimers bind to specific response elements on DNA and activate the transcription of vitamin D3-responsive target genes. Plays a central role in calcium homeostasis. Also functions as a receptor for the secondary bile acid lithocholic acid (LCA) and its metabolites. This chain is Vitamin D3 receptor (VDR), found in Gallus gallus (Chicken).